We begin with the raw amino-acid sequence, 427 residues long: Mannosylglucosylglycerate synthase (427 aa).

The protein belongs to the glycosyltransferase group 1 family. The cofactor is Co(2+). Mg(2+) is required as a cofactor. Requires Mn(2+) as cofactor. Ni(2+) serves as cofactor.

The catalysed reaction is (2R)-2-O-(alpha-D-glucopyranosyl)-glycerate + GDP-alpha-D-mannose = (2R)-2-O-[alpha-D-mannopyranosyl-(1-&gt;2)-alpha-D-glucopyranosyl]-glycerate + GDP + H(+). In terms of biological role, catalyzes the synthesis of mannosylglucosylglycerate (MGG) from glucosylglycerate (GG) and GDP-mannose. In Thermotoga maritima (strain ATCC 43589 / DSM 3109 / JCM 10099 / NBRC 100826 / MSB8), this protein is Mannosylglucosylglycerate synthase.